Reading from the N-terminus, the 281-residue chain is MQQPFNYPYPQIYWVDSSASSPWAPPGTVLPCPTSVPRRPGQRRPPPPPPPPPLPPPPPPPPLPPLPLPPLKKRGNHSTGLCLLVMFFMVLVALVGLGLGMFQLFHLQKELAELRESTSQMHTASSLEKQIGHPSPPPEKKELRKVAHLTGKSNSRSMPLEWEDTYGIVLLSGVKYKKGGLVINETGLYFVYSKVYFRGQSCNNLPLSHKVYMRNSKYPQDLVMMEGKMMSYCTTGQMWARSSYLGAVFNLTSADHLYVNVSELSLVNFEESQTFFGLYKL.

Topologically, residues 1–80 (MQQPFNYPYP…LKKRGNHSTG (80 aa)) are cytoplasmic. The interval 20–71 (SSPWAPPGTVLPCPTSVPRRPGQRRPPPPPPPPPLPPPPPPPPLPPLPLPPL) is disordered. The span at 43 to 70 (RRPPPPPPPPPLPPPPPPPPLPPLPLPP) shows a compositional bias: pro residues. Residues 81-102 (LCLLVMFFMVLVALVGLGLGMF) form a helical; Signal-anchor for type II membrane protein membrane-spanning segment. Topologically, residues 103–281 (QLFHLQKELA…SQTFFGLYKL (179 aa)) are extracellular. Residues 118–128 (TSQMHTASSLE) show a composition bias toward polar residues. The segment at 118–142 (TSQMHTASSLEKQIGHPSPPPEKKE) is disordered. Residues 145–281 (KVAHLTGKSN…SQTFFGLYKL (137 aa)) enclose the THD domain. N-linked (GlcNAc...) asparagine glycosylation is present at N184. C202 and C233 are joined by a disulfide. Residues N250 and N260 are each glycosylated (N-linked (GlcNAc...) asparagine).

It belongs to the tumor necrosis factor family. Homotrimer. Interacts with ARHGAP9, BAIAP2L1, BTK, CACNB3, CACNB4, CRK, DLG2, DNMBP, DOCK4, EPS8L3, FGR, FYB1, FYN, HCK, ITK, ITSN2, KALRN, LYN, MACC1, MIA, MPP4, MYO15A, NCF1, NCK1, NCK2, NCKIPSD, OSTF1, PIK3R1, PSTPIP1, RIMBP3C, SAMSN1, SH3GL3, SH3PXD2B, SH3PXD2A, SH3RF2, SKAP2, SNX33, SNX9, SORBS3, SPTA1, SRC, SRGAP1, SRGAP2, SRGAP3, TEC, TJP3 and YES1. Post-translationally, the soluble form derives from the membrane form by proteolytic processing. The membrane-bound form undergoes two successive intramembrane proteolytic cleavages. The first one is processed by ADAM10 producing an N-terminal fragment, which lacks the receptor-binding extracellular domain. This ADAM10-processed FasL (FasL APL) remnant form is still membrane anchored and further processed by SPPL2A that liberates the FasL intracellular domain (FasL ICD). FasL shedding by ADAM10 is a prerequisite for subsequent intramembrane cleavage by SPPL2A in T-cells. N-glycosylated. Glycosylation enhances apoptotic activity. In terms of processing, phosphorylated by FGR on tyrosine residues; this is required for ubiquitination and subsequent internalization. Post-translationally, monoubiquitinated.

The protein resides in the cell membrane. Its subcellular location is the cytoplasmic vesicle lumen. It is found in the lysosome lumen. It localises to the secreted. The protein localises to the nucleus. Cytokine that binds to TNFRSF6/FAS, a receptor that transduces the apoptotic signal into cells. Involved in cytotoxic T-cell-mediated apoptosis, natural killer cell-mediated apoptosis and in T-cell development. Initiates fratricidal/suicidal activation-induced cell death (AICD) in antigen-activated T-cells contributing to the termination of immune responses. TNFRSF6/FAS-mediated apoptosis also has a role in the induction of peripheral tolerance. Binds to TNFRSF6B/DcR3, a decoy receptor that blocks apoptosis. Its function is as follows. Induces FAS-mediated activation of NF-kappa-B, initiating non-apoptotic signaling pathways. Can induce apoptosis but does not appear to be essential for this process. In terms of biological role, cytoplasmic form induces gene transcription inhibition. The chain is Tumor necrosis factor ligand superfamily member 6 (FASLG) from Homo sapiens (Human).